The sequence spans 338 residues: GTPase Obg (338 aa).

The Obg domain occupies methionine 1–leucine 159. One can recognise an OBG-type G domain in the interval alanine 160–tryptophan 331. Residues glycine 166–serine 173, phenylalanine 191–lysine 195, aspartate 213–glycine 216, asparagine 283–aspartate 286, and serine 312–alanine 314 contribute to the GTP site. Positions 173 and 193 each coordinate Mg(2+).

The protein belongs to the TRAFAC class OBG-HflX-like GTPase superfamily. OBG GTPase family. Monomer. Mg(2+) is required as a cofactor.

The protein localises to the cytoplasm. Its function is as follows. An essential GTPase which binds GTP, GDP and possibly (p)ppGpp with moderate affinity, with high nucleotide exchange rates and a fairly low GTP hydrolysis rate. Plays a role in control of the cell cycle, stress response, ribosome biogenesis and in those bacteria that undergo differentiation, in morphogenesis control. This chain is GTPase Obg, found in Geobacter sulfurreducens (strain ATCC 51573 / DSM 12127 / PCA).